The primary structure comprises 442 residues: 26S proteasome regulatory subunit 6A (442 aa).

Serine 12 is modified (phosphoserine). Residue 230 to 237 (GPPGTGKT) coordinates ATP. The residue at position 379 (serine 379) is a Phosphoserine.

This sequence belongs to the AAA ATPase family. As to quaternary structure, component of the 19S proteasome regulatory particle complex. The 26S proteasome consists of a 20S core particle (CP) and two 19S regulatory subunits (RP). The regulatory particle is made of a lid composed of 9 subunits, a base containing 6 ATPases including PSMC3 and few additional components. Interacts with PAAF1.

The protein resides in the cytoplasm. The protein localises to the nucleus. Component of the 26S proteasome, a multiprotein complex involved in the ATP-dependent degradation of ubiquitinated proteins. This complex plays a key role in the maintenance of protein homeostasis by removing misfolded or damaged proteins, which could impair cellular functions, and by removing proteins whose functions are no longer required. Therefore, the proteasome participates in numerous cellular processes, including cell cycle progression, apoptosis, or DNA damage repair. PSMC3 belongs to the heterohexameric ring of AAA (ATPases associated with diverse cellular activities) proteins that unfolds ubiquitinated target proteins that are concurrently translocated into a proteolytic chamber and degraded into peptides. The sequence is that of 26S proteasome regulatory subunit 6A (Psmc3) from Mus musculus (Mouse).